The sequence spans 573 residues: Probable D-xylulose kinase A (573 aa).

Substrate contacts are provided by H97, R168, D284, and N285. ATP-binding positions include W366, 471-472 (GG), and N475.

The protein belongs to the FGGY kinase family.

The protein localises to the cytoplasm. It carries out the reaction D-xylulose + ATP = D-xylulose 5-phosphate + ADP + H(+). Highly specific D-xylulose kinase which participates in the catabolism of xylose. Xylose is a major component of hemicelluloses such as xylan. Most fungi utilize D-xylose via three enzymatic reactions, xylose reductase (XR), xylitol dehydrogenase (XDH), and xylulokinase, to form xylulose 5-phosphate, which enters pentose phosphate pathway. The sequence is that of Probable D-xylulose kinase A (xkiA) from Neosartorya fischeri (strain ATCC 1020 / DSM 3700 / CBS 544.65 / FGSC A1164 / JCM 1740 / NRRL 181 / WB 181) (Aspergillus fischerianus).